We begin with the raw amino-acid sequence, 1463 residues long: Secretory phospholipase A2 receptor (1463 aa).

Positions 1 to 20 (MPLLSLSLLLLLLQVPAGSA) are cleaved as a signal peptide. At 21 to 1392 (ETAAWAVTPE…IHTVKKHPGK (1372 aa)) the chain is on the extracellular side. One can recognise a Ricin B-type lectin domain in the interval 38–115 (KGIFIIQSEN…CDSTHVSLKW (78 aa)). A glycan (N-linked (GlcNAc...) asparagine) is linked at Asn-93. One can recognise a Fibronectin type-II domain in the interval 173 to 221 (AHGTPCMFPFQYNQQWHHECTREGREDNLLWCATTSRYERDEKWGFCPD). 16 disulfide bridges follow: Cys-178-Cys-204, Cys-192-Cys-219, Cys-260-Cys-354, Cys-330-Cys-346, Cys-406-Cys-501, Cys-478-Cys-493, Cys-617-Cys-634, Cys-699-Cys-796, Cys-774-Cys-788, Cys-840-Cys-938, Cys-915-Cys-930, Cys-992-Cys-1096, Cys-1068-Cys-1088, Cys-1209-Cys-1223, Cys-1280-Cys-1377, and Cys-1354-Cys-1369. 8 C-type lectin domains span residues 229-353 (CDAV…LPYV), 357-500 (YLNP…LFYL), 504-641 (TGLV…KAMS), 646-795 (PVEN…REWI), 799-937 (PRDV…MPSI), 941-1095 (KKVW…YGFV), 1099-1230 (MQDA…LQGA), and 1235-1376 (PTET…KGFI). An N-linked (GlcNAc...) asparagine glycan is attached at Asn-454. An N-linked (GlcNAc...) asparagine glycan is attached at Asn-1057. Residues 1393-1421 (GPSHSVIPLTVALTLLVILAISTLSFCMY) form a helical membrane-spanning segment. The Cytoplasmic portion of the chain corresponds to 1422-1463 (KHSHIIFGRLAQFRNPYYPSANFSTVHLEENILISDLEKNDQ). An Endocytosis signal motif is present at residues 1436 to 1442 (NPYYPSA).

In terms of assembly, interacts with sPLA2-IB/PLA2G1B; this interaction mediates intracellular signaling as well as clearance of extracellular sPLA2-IB/PLA2G1B via endocytotic pathway. Interacts with sPLA2-X/PLA2G10; this interaction mediates sPLA2-X/PLA2G10 clearance and inactivation. Post-translationally, the secretory phospholipase A2 receptor form may be produced by the action of metalloproteinases. It contains all extracellular domains and only lacks transmembrane and cytosolic regions. It is however unclear whether this form is produced by proteolytic cleavage as suggested by some experiments, or by alternative splicing.

The protein localises to the cell membrane. Its subcellular location is the secreted. In terms of biological role, receptor for secretory phospholipase A2 (sPLA2). Also able to bind to snake PA2-like toxins. Although its precise function remains unclear, binding of sPLA2 to its receptor participates in both positive and negative regulation of sPLA2 functions as well as clearance of sPLA2. Binding of sPLA2-IB/PLA2G1B induces various effects depending on the cell type, such as activation of the mitogen-activated protein kinase (MAPK) cascade to induce cell proliferation, the production of lipid mediators, selective release of arachidonic acid in bone marrow-derived mast cells. In neutrophils, binding of sPLA2-IB/PLA2G1B can activate p38 MAPK to stimulate elastase release and cell adhesion. May be involved in responses in pro-inflammatory cytokine productions during endotoxic shock. Also has endocytic properties and rapidly internalizes sPLA2 ligands, which is particularly important for the clearance of extracellular sPLA2s to protect their potent enzymatic activities. The soluble secretory phospholipase A2 receptor form is circulating and acts as a negative regulator of sPLA2 functions by blocking the biological functions of sPLA2-IB/PLA2G1B and sPLA2-X/PLA2G10. This Bos taurus (Bovine) protein is Secretory phospholipase A2 receptor (PLA2R1).